Reading from the N-terminus, the 303-residue chain is N-acetyl-D-glucosamine kinase (303 aa).

ATP contacts are provided by residues 4–11 (GFDIGGTK) and 133–140 (GVGGGLVL). Residues His157, Cys177, Cys179, and Cys184 each coordinate Zn(2+).

This sequence belongs to the ROK (NagC/XylR) family. NagK subfamily.

It carries out the reaction N-acetyl-D-glucosamine + ATP = N-acetyl-D-glucosamine 6-phosphate + ADP + H(+). It participates in cell wall biogenesis; peptidoglycan recycling. In terms of biological role, catalyzes the phosphorylation of N-acetyl-D-glucosamine (GlcNAc) derived from cell-wall degradation, yielding GlcNAc-6-P. The chain is N-acetyl-D-glucosamine kinase from Salmonella dublin (strain CT_02021853).